The chain runs to 118 residues: UPF0342 protein BCE_0953 (118 aa).

The protein belongs to the UPF0342 family.

The polypeptide is UPF0342 protein BCE_0953 (Bacillus cereus (strain ATCC 10987 / NRS 248)).